Here is a 172-residue protein sequence, read N- to C-terminus: Disulfide bond formation protein B (172 aa).

Over 1 to 13 (MNWLAQLPTQRTP) the chain is Cytoplasmic. A helical membrane pass occupies residues 14–30 (WLLFSGIVFLLEITALF). The Periplasmic portion of the chain corresponds to 31-48 (FQYKMGLAPCIMCIYQRT). An intrachain disulfide couples C40 to C43. The helical transmembrane segment at 49–64 (AVLGLLIAGIIGTSNP) threads the bilayer. At 65–71 (EHRGVRL) the chain is on the cytoplasmic side. The helical transmembrane segment at 72 to 89 (LAYSVWAVSSVWGFIIAR) threads the bilayer. Over 90-145 (EHIEMQTTTDPFAFSCEFEPNFPAFMPLHEWIPSFFAATGDCGNIDWQFAGLSMPA) the chain is Periplasmic. An intrachain disulfide couples C105 to C131. Residues 146-164 (WMEVIFALFAATLFLLVTS) form a helical membrane-spanning segment. Topologically, residues 165–172 (RLMTKRSL) are cytoplasmic.

This sequence belongs to the DsbB family.

The protein localises to the cell inner membrane. In terms of biological role, required for disulfide bond formation in some periplasmic proteins. Acts by oxidizing the DsbA protein. This is Disulfide bond formation protein B from Pseudoalteromonas translucida (strain TAC 125).